The primary structure comprises 34 residues: Kappa-theraphotoxin-Scg1a (34 aa).

Cystine bridges form between cysteine 2–cysteine 16, cysteine 9–cysteine 21, and cysteine 15–cysteine 28. Residues 4–6 (YLF) form an involved in active face region.

Belongs to the neurotoxin 10 (Hwtx-1) family. 09 (HaTx) subfamily. Expressed by the venom gland.

Its subcellular location is the secreted. In terms of biological role, reversibly inhibits potassium currents in oocytes expressing Kv2.1/KCNB1 channels (Kd=2.7 uM). Acts by shifting activation of the channel to more depolarized voltages. The toxin may bind to the S3b-S4 helices of the voltage sensor paddle. One, two, three or four toxin molecules may bind the Kv2.1/KCNB1 channel. It shows low to moderate affinity for lipid bilayers. It partitions into the bilayer membrane, where it stabilizes at the water/membrane interface. This Stromatopelma calceatum griseipes (Feather leg baboon tarantula) protein is Kappa-theraphotoxin-Scg1a.